Here is a 344-residue protein sequence, read N- to C-terminus: Microcin C7 self-immunity protein MccF (344 aa).

The protein belongs to the peptidase S66 family.

Its function is as follows. Involved in specific self-immunity to microcin C7. The chain is Microcin C7 self-immunity protein MccF (mccF) from Escherichia coli.